A 270-amino-acid polypeptide reads, in one-letter code: Formamidopyrimidine-DNA glycosylase (270 aa).

Proline 2 functions as the Schiff-base intermediate with DNA in the catalytic mechanism. The active-site Proton donor is glutamate 3. Lysine 57 acts as the Proton donor; for beta-elimination activity in catalysis. DNA is bound by residues histidine 90, arginine 109, and lysine 150. The FPG-type zinc-finger motif lies at 235 to 269; it reads LVYGNKDKPCPRCGTKIKSIIIGQRNSFFCPQCQK. Arginine 259 serves as the catalytic Proton donor; for delta-elimination activity.

The protein belongs to the FPG family. Monomer. Zn(2+) serves as cofactor.

The catalysed reaction is Hydrolysis of DNA containing ring-opened 7-methylguanine residues, releasing 2,6-diamino-4-hydroxy-5-(N-methyl)formamidopyrimidine.. It catalyses the reaction 2'-deoxyribonucleotide-(2'-deoxyribose 5'-phosphate)-2'-deoxyribonucleotide-DNA = a 3'-end 2'-deoxyribonucleotide-(2,3-dehydro-2,3-deoxyribose 5'-phosphate)-DNA + a 5'-end 5'-phospho-2'-deoxyribonucleoside-DNA + H(+). Its function is as follows. Involved in base excision repair of DNA damaged by oxidation or by mutagenic agents. Acts as a DNA glycosylase that recognizes and removes damaged bases. Has a preference for oxidized purines, such as 7,8-dihydro-8-oxoguanine (8-oxoG). Has AP (apurinic/apyrimidinic) lyase activity and introduces nicks in the DNA strand. Cleaves the DNA backbone by beta-delta elimination to generate a single-strand break at the site of the removed base with both 3'- and 5'-phosphates. The protein is Formamidopyrimidine-DNA glycosylase of Histophilus somni (strain 129Pt) (Haemophilus somnus).